The chain runs to 234 residues: Peroxiredoxin-2E, chloroplastic (234 aa).

The N-terminal 70 residues, Met1–Thr70, are a transit peptide targeting the chloroplast. In terms of domain architecture, Thioredoxin spans Ile73 to Leu234. Ser82 is modified (phosphoserine). Cys121 acts as the Cysteine sulfenic acid (-SOH) intermediate in catalysis.

This sequence belongs to the peroxiredoxin family. Prx5 subfamily. Monomer. As to expression, expressed in all tissues but predominantly in buds, siliques and seeds.

Its subcellular location is the plastid. It localises to the chloroplast stroma. The enzyme catalyses [glutaredoxin]-dithiol + a hydroperoxide = [glutaredoxin]-disulfide + an alcohol + H2O. In terms of biological role, thiol-specific peroxidase that catalyzes the reduction of hydrogen peroxide and organic hydroperoxides to water and alcohols, respectively. Plays a role in cell protection against oxidative stress by detoxifying peroxides. May be involved in chloroplast redox homeostasis. The chain is Peroxiredoxin-2E, chloroplastic (PRXIIE) from Arabidopsis thaliana (Mouse-ear cress).